Consider the following 277-residue polypeptide: Large ribosomal subunit protein uL2 (277 aa).

The interval 222-277 (GSVMNPNDHPHGGGEGKSPVGHPGPLTPWGKPALGLKTRKNKKYSDKFIIKRKNKK) is disordered.

This sequence belongs to the universal ribosomal protein uL2 family. As to quaternary structure, part of the 50S ribosomal subunit. Forms a bridge to the 30S subunit in the 70S ribosome.

In terms of biological role, one of the primary rRNA binding proteins. Required for association of the 30S and 50S subunits to form the 70S ribosome, for tRNA binding and peptide bond formation. It has been suggested to have peptidyltransferase activity; this is somewhat controversial. Makes several contacts with the 16S rRNA in the 70S ribosome. The polypeptide is Large ribosomal subunit protein uL2 (Clostridium kluyveri (strain NBRC 12016)).